A 136-amino-acid chain; its full sequence is Large ribosomal subunit protein bL17 (136 aa).

The protein belongs to the bacterial ribosomal protein bL17 family. Part of the 50S ribosomal subunit. Contacts protein L32.

The sequence is that of Large ribosomal subunit protein bL17 from Rickettsia peacockii (strain Rustic).